The chain runs to 323 residues: NADH-cytochrome b5 reductase 2 (323 aa).

A helical membrane pass occupies residues 30-46 (LAPIYTAVGLTGLSVGL). The region spanning 72–177 (QGWVDLKLSE…KGPLPKYQWE (106 aa)) is the FAD-binding FR-type domain. 180–215 (KHEHIALIAGGTGITPMYQLIRQIFKNPDDKTKVTL) lines the FAD pocket.

This sequence belongs to the flavoprotein pyridine nucleotide cytochrome reductase family. FAD is required as a cofactor.

Its subcellular location is the mitochondrion outer membrane. It carries out the reaction 2 Fe(III)-[cytochrome b5] + NADH = 2 Fe(II)-[cytochrome b5] + NAD(+) + H(+). Functionally, may mediate the reduction of outer membrane cytochrome b5. This Aspergillus oryzae (strain ATCC 42149 / RIB 40) (Yellow koji mold) protein is NADH-cytochrome b5 reductase 2 (mcr1).